The sequence spans 177 residues: Large ribosomal subunit protein uL6 (177 aa).

The protein belongs to the universal ribosomal protein uL6 family. Part of the 50S ribosomal subunit.

This protein binds to the 23S rRNA, and is important in its secondary structure. It is located near the subunit interface in the base of the L7/L12 stalk, and near the tRNA binding site of the peptidyltransferase center. The polypeptide is Large ribosomal subunit protein uL6 (Aliivibrio fischeri (strain MJ11) (Vibrio fischeri)).